A 374-amino-acid polypeptide reads, in one-letter code: C-X-C chemokine receptor type 5 (374 aa).

Topologically, residues 1–57 (MNSPISLDMGAITYNMDDLYKELAIYSNSTEIPLQDSIFCSTEEGPLLTSFKTIFMP) are extracellular. Asparagine 28 carries N-linked (GlcNAc...) asparagine glycosylation. The chain crosses the membrane as a helical span at residues 58 to 78 (VAYSLIFLLGMMGNILVLVIL). The Cytoplasmic portion of the chain corresponds to 79 to 90 (ERHRHTRSSTET). Residues 91-111 (FLFHLAVADLLLVFILPFAVA) traverse the membrane as a helical segment. At 112-126 (EGSVGWVLGTFLCKT) the chain is on the extracellular side. Cysteine 124 and cysteine 204 form a disulfide bridge. The chain crosses the membrane as a helical span at residues 127 to 147 (VIALHKINFYCSSLLLACIAV). Topologically, residues 148–169 (DRYLAIVHAVHAYRRRRLLSIH) are cytoplasmic. Residues 170–190 (ITCSTIWLAGFLFALPELLFA) traverse the membrane as a helical segment. The Extracellular segment spans residues 191–221 (KVVQPHNNESLPQCIFSQENEAETRAWFASR). Asparagine 198 carries N-linked (GlcNAc...) asparagine glycosylation. Residues 222-242 (FLYHTGGFLLPMLVMAWCYVG) form a helical membrane-spanning segment. Over 243-261 (VVHRLLQAQRRPQRQKAVR) the chain is Cytoplasmic. The helical transmembrane segment at 262-282 (VAILVTSIFLLCWSPYHIVIF) threads the bilayer. Over 283–306 (LDTLERLKAVNSSCELSGYLSVAI) the chain is Extracellular. The chain crosses the membrane as a helical span at residues 307–327 (TLCEFLGLAHCCLNPMLYTFA). The Cytoplasmic portion of the chain corresponds to 328–374 (GVKFRSDLSRLLTKLGCAGPASLCQLFPGWRKSSLSESENATSLTTF).

The protein belongs to the G-protein coupled receptor 1 family. Expressed in neuronal and lymphatic tissue.

It localises to the cell membrane. In terms of biological role, cytokine receptor that binds to B-lymphocyte chemoattractant (BLC). Involved in B-cell migration into B-cell follicles of spleen and Peyer patches but not into those of mesenteric or peripheral lymph nodes. The protein is C-X-C chemokine receptor type 5 (Cxcr5) of Rattus norvegicus (Rat).